A 399-amino-acid chain; its full sequence is Glutathione S-transferase LANCL1 (399 aa).

Position 2 is an N-acetylalanine (alanine 2). Lysine 142 is subject to N6-acetyllysine. Cysteine 276 lines the Zn(2+) pocket. Glutathione is bound at residue lysine 317. Zn(2+) contacts are provided by cysteine 322 and histidine 323. 364–367 (RTPD) is a glutathione binding site.

Belongs to the LanC-like protein family. As to quaternary structure, interacts with the C-terminal of STOM. Interacts with the EPS8 SH3 domain. Interaction with EPS8 is inhibited by glutathione binding. (Microbial infection) Interacts with P.falciparum SBP1. In terms of tissue distribution, detected in erythrocytes, brain, kidney, testis, ovary, heart, lung, placenta and spleen (at protein level). Ubiquitous. Strongly expressed in brain, spinal cord, pituitary gland, kidney, heart, skeletal muscle, pancreas, ovary and testis.

It is found in the cytoplasm. It localises to the cell membrane. It catalyses the reaction RX + glutathione = an S-substituted glutathione + a halide anion + H(+). It carries out the reaction 1-chloro-2,4-dinitrobenzene + glutathione = 2,4-dinitrophenyl-S-glutathione + chloride + H(+). Functionally, functions as a glutathione transferase. Catalyzes conjugation of the glutathione (GSH) to artificial substrates 1-chloro-2,4-dinitrobenzene (CDNB) and p-nitrophenyl acetate. Mitigates neuronal oxidative stress during normal postnatal development and in response to oxidative stresses probably through GSH antioxidant defense mechanism. May play a role in EPS8 signaling. Binds glutathione. In Homo sapiens (Human), this protein is Glutathione S-transferase LANCL1.